The following is a 313-amino-acid chain: UPF0252 protein AF_0384 (313 aa).

This sequence belongs to the UPF0252 family.

In Archaeoglobus fulgidus (strain ATCC 49558 / DSM 4304 / JCM 9628 / NBRC 100126 / VC-16), this protein is UPF0252 protein AF_0384.